Consider the following 627-residue polypeptide: MSATQKNNITRLEQLDRQSTQPFPNSRKVYLTGSRPDIRVPVREISLADTPTAFGGEKNPPVFVYDTSGPYTDPEVRIDLRKGLPDVRSRWIDERGDTEILPGLTSEFGQARLADASLDALRFAHVRTPRRAKPGANVSQMHYAKKGIITPEMEYIAIRENMKLQEARAAGLLDQQHPGHSFGANTPKEITPEFVREEVARGRAIIPANINHTELEPMIIGRNFLVKINGNIGNSALGSSIEEEVEKLTWGIRWGADTVMDLSTGKHIHETREWILRNSPVPIGTVPIYQALEKVNGVAEDLTWEIFRDTLIEQAEQGVDYFTIHAGVLLRYVPLTAKRVTGIVSRGGSIMAKWCLAHHQENFLYTHFEEICEIMKAYDVSFSLGDGLRPGSVADANDAAQFGELETLGELTKIAWKHDVQVMIEGPGHVPMQLIKENMDKQLECCDEAPFYTLGPLTTDIAPGYDHITSGIGAAMIGWFGCAMLCYVTPKEHLGLPNKDDVKTGIITYKIAAHAADLAKGHPGAQIRDNALSKARFEFRWEDQFNLGLDPDTARAFHDETLPKDSAKVAHFCSMCGPKFCSMKITQEVRDYAKENGLSDESKAIEAGFQEQAARFKDEGSVIYRQV.

The span at 1 to 24 (MSATQKNNITRLEQLDRQSTQPFP) shows a compositional bias: polar residues. A disordered region spans residues 1-29 (MSATQKNNITRLEQLDRQSTQPFPNSRKV). Residues asparagine 231, methionine 260, tyrosine 289, histidine 325, 345–347 (SRG), 386–389 (DGLR), and glutamate 425 contribute to the substrate site. Position 429 (histidine 429) interacts with Zn(2+). Residue tyrosine 452 participates in substrate binding. Position 493 (histidine 493) interacts with Zn(2+). The [4Fe-4S] cluster site is built by cysteine 573, cysteine 576, and cysteine 581.

This sequence belongs to the ThiC family. In terms of assembly, homodimer. [4Fe-4S] cluster is required as a cofactor.

It carries out the reaction 5-amino-1-(5-phospho-beta-D-ribosyl)imidazole + S-adenosyl-L-methionine = 4-amino-2-methyl-5-(phosphooxymethyl)pyrimidine + CO + 5'-deoxyadenosine + formate + L-methionine + 3 H(+). It functions in the pathway cofactor biosynthesis; thiamine diphosphate biosynthesis. Its function is as follows. Catalyzes the synthesis of the hydroxymethylpyrimidine phosphate (HMP-P) moiety of thiamine from aminoimidazole ribotide (AIR) in a radical S-adenosyl-L-methionine (SAM)-dependent reaction. This Pseudomonas aeruginosa (strain UCBPP-PA14) protein is Phosphomethylpyrimidine synthase.